Here is a 240-residue protein sequence, read N- to C-terminus: MGVTNFFGEAWRTGKSIVTGLGITFREMMFRPAITVFYPEQRDDVPPWFRGIPVLKTDLRTGEYKCTSCMQCAQACPVNVITIEWHQDPETKKKVCDRFAIDMSRCMLCNFCVEACPFDSLVMGYDYELCKVNPENLVFEFEDLLRLGLKYSKAEEPGPKATRSSTPPWVFHGLTNATEDDIQDIHGYLGRPPLPKGYEPELKPQFRKPAEEAAEAQQAEAAGQPAAEPGKTNGEEAGQP.

4Fe-4S ferredoxin-type domains lie at 57–86 and 97–126; these read TDLR…IEWH and DRFA…MGYD. Residues Cys-66, Cys-69, Cys-72, Cys-76, Cys-106, Cys-109, Cys-112, and Cys-116 each coordinate [4Fe-4S] cluster. The interval 185–240 is disordered; the sequence is IHGYLGRPPLPKGYEPELKPQFRKPAEEAAEAQQAEAAGQPAAEPGKTNGEEAGQP. Positions 198–211 are enriched in basic and acidic residues; it reads YEPELKPQFRKPAE. The span at 215 to 230 shows a compositional bias: low complexity; it reads EAQQAEAAGQPAAEPG.

The protein belongs to the complex I 23 kDa subunit family. NDH-1 is composed of 14 different subunits. Subunits NuoA, H, J, K, L, M, N constitute the membrane sector of the complex. The cofactor is [4Fe-4S] cluster.

Its subcellular location is the cell membrane. It carries out the reaction a quinone + NADH + 5 H(+)(in) = a quinol + NAD(+) + 4 H(+)(out). In terms of biological role, NDH-1 shuttles electrons from NADH, via FMN and iron-sulfur (Fe-S) centers, to quinones in the respiratory chain. The immediate electron acceptor for the enzyme in this species is believed to be ubiquinone. Couples the redox reaction to proton translocation (for every two electrons transferred, four hydrogen ions are translocated across the cytoplasmic membrane), and thus conserves the redox energy in a proton gradient. The sequence is that of NADH-quinone oxidoreductase subunit I 2 from Symbiobacterium thermophilum (strain DSM 24528 / JCM 14929 / IAM 14863 / T).